A 478-amino-acid chain; its full sequence is Glycogen synthase (478 aa).

Lysine 16 is an ADP-alpha-D-glucose binding site.

It belongs to the glycosyltransferase 1 family. Bacterial/plant glycogen synthase subfamily.

The catalysed reaction is [(1-&gt;4)-alpha-D-glucosyl](n) + ADP-alpha-D-glucose = [(1-&gt;4)-alpha-D-glucosyl](n+1) + ADP + H(+). It functions in the pathway glycan biosynthesis; glycogen biosynthesis. Its function is as follows. Synthesizes alpha-1,4-glucan chains using ADP-glucose. In Lachnoclostridium phytofermentans (strain ATCC 700394 / DSM 18823 / ISDg) (Clostridium phytofermentans), this protein is Glycogen synthase.